A 244-amino-acid chain; its full sequence is uncharacterized protein (244 aa).

In terms of domain architecture, HTH gntR-type spans 12–80; that stretch reads VALWRQIADR…QGRGTMIERK (69 aa). Residues 40–59 constitute a DNA-binding region (H-T-H motif); sequence ETALAAEFGVNRHTVRSALA.

This is an uncharacterized protein from Rhizobium meliloti (strain 1021) (Ensifer meliloti).